The primary structure comprises 198 residues: Endoribonuclease YbeY (198 aa).

3 residues coordinate Zn(2+): His156, His160, and His166.

Belongs to the endoribonuclease YbeY family. Requires Zn(2+) as cofactor.

It is found in the cytoplasm. Its function is as follows. Single strand-specific metallo-endoribonuclease involved in late-stage 70S ribosome quality control and in maturation of the 3' terminus of the 16S rRNA. The sequence is that of Endoribonuclease YbeY from Cupriavidus necator (strain ATCC 17699 / DSM 428 / KCTC 22496 / NCIMB 10442 / H16 / Stanier 337) (Ralstonia eutropha).